Consider the following 420-residue polypeptide: UDP-N-acetylglucosamine 1-carboxyvinyltransferase (420 aa).

Position 22–23 (22–23 (KN)) interacts with phosphoenolpyruvate. UDP-N-acetyl-alpha-D-glucosamine is bound at residue arginine 93. Cysteine 117 (proton donor) is an active-site residue. At cysteine 117 the chain carries 2-(S-cysteinyl)pyruvic acid O-phosphothioketal. 2 residues coordinate UDP-N-acetyl-alpha-D-glucosamine: aspartate 307 and valine 329.

It belongs to the EPSP synthase family. MurA subfamily.

Its subcellular location is the cytoplasm. It carries out the reaction phosphoenolpyruvate + UDP-N-acetyl-alpha-D-glucosamine = UDP-N-acetyl-3-O-(1-carboxyvinyl)-alpha-D-glucosamine + phosphate. The protein operates within cell wall biogenesis; peptidoglycan biosynthesis. Its function is as follows. Cell wall formation. Adds enolpyruvyl to UDP-N-acetylglucosamine. The polypeptide is UDP-N-acetylglucosamine 1-carboxyvinyltransferase (Marinobacter nauticus (strain ATCC 700491 / DSM 11845 / VT8) (Marinobacter aquaeolei)).